A 245-amino-acid chain; its full sequence is 8-amino-3,8-dideoxy-manno-octulosonate cytidylyltransferase (245 aa).

The protein belongs to the KdsB family.

It localises to the cytoplasm. The catalysed reaction is 8-amino-3,8-dideoxy-alpha-D-manno-octulosonate + CTP = CMP-8-amino-3,8-dideoxy-alpha-D-manno-oct-2-ulosonate + diphosphate. It functions in the pathway bacterial outer membrane biogenesis; lipopolysaccharide biosynthesis. Activates KDO8N (a required 8-carbon sugar) for incorporation into bacterial lipopolysaccharide in the Shewanella genus. The chain is 8-amino-3,8-dideoxy-manno-octulosonate cytidylyltransferase from Shewanella baltica (strain OS195).